The chain runs to 609 residues: MSQESSYGKWTISSSDDSEDEKPKPVKPSTSSGPQAGQGVSKEPTYTCSEARKAAHKRQISPVKFNNTDSVLPHKKQKMDSPEGLGWCLSSSDDEQQPDVTQQEQPKGVPPQEKKYAPSANVTTAQKVEDRSPPDSHRAQRADEEYETSGEGQDIWDMLDKENPFQFYLTRVSGIKAKYNSKALHIKDILSPLFGTLVSSAQFNYCFDVNWLIKQYPPEFRKKPILLVHGDKREAKADLHAQAKPYANISLCQAKLDIAFGTHHTKMMLLLYEEGLRVVIHTSNLIREDWHQKTQGIWLSPLYPRIYQGNHTSGESSTHFKADLTSYLMAYNAPPLQEWIDIIQEHDLSETNVYLIGSTPGRFQGSHKDNWGHFRLRKLLQAHAPSAPRGECWPVVGQFSSIGSLGPDESKWLCSEFKESLLAVREEGRTPGRSAVPLHLIYPSVENVRTSLEGYPAGGSLPYGIQTAEKQRWLHPYFHKWSAETSGRSNAMPHIKTYMRPSPDFSKLAWFLVTSANLSKAAWGALEKNGAQLMIRSYELGVLFLPSAFGLDTFKVKQKFFSSSSEPMASFPVPYDLPPELYGSKDRPWIWNIPYVKAPDTHGNMWVPS.

The segment covering 1-12 (MSQESSYGKWTI) has biased composition (polar residues). A disordered region spans residues 1–154 (MSQESSYGKW…EYETSGEGQD (154 aa)). Residues Ser-61, Ser-119, and Ser-132 each carry the phosphoserine modification. The span at 127–143 (KVEDRSPPDSHRAQRAD) shows a compositional bias: basic and acidic residues. Thr-148 is subject to Phosphothreonine. At Ser-149 the chain carries Phosphoserine. His-264 (nucleophile) is an active-site residue. Substrate is bound at residue Lys-266. The segment at 401 to 404 (SIGS) is interaction with DNA. His-494 (proton donor/acceptor) is an active-site residue. Residue Lys-496 coordinates substrate.

Belongs to the tyrosyl-DNA phosphodiesterase family. In terms of assembly, monomer.

It is found in the nucleus. The protein resides in the cytoplasm. DNA repair enzyme that can remove a variety of covalent adducts from DNA through hydrolysis of a 3'-phosphodiester bond, giving rise to DNA with a free 3' phosphate. Catalyzes the hydrolysis of dead-end complexes between DNA and the topoisomerase I active site tyrosine residue. Hydrolyzes 3'-phosphoglycolates on protruding 3' ends on DNA double-strand breaks due to DNA damage by radiation and free radicals. Acts on blunt-ended double-strand DNA breaks and on single-stranded DNA. Has low 3'exonuclease activity and can remove a single nucleoside from the 3'end of DNA and RNA molecules with 3'hydroxyl groups. Has no exonuclease activity towards DNA or RNA with a 3'phosphate. The polypeptide is Tyrosyl-DNA phosphodiesterase 1 (Tdp1) (Rattus norvegicus (Rat)).